We begin with the raw amino-acid sequence, 163 residues long: uncharacterized protein (163 aa).

This is an uncharacterized protein from Methanocaldococcus jannaschii (strain ATCC 43067 / DSM 2661 / JAL-1 / JCM 10045 / NBRC 100440) (Methanococcus jannaschii).